Reading from the N-terminus, the 318-residue chain is Small ribosomal subunit protein mS26 (318 aa).

Residues 295-318 (IDSKLNPTSNGAGNNGNNNNTTNL) form a disordered region. Over residues 300–318 (NPTSNGAGNNGNNNNTTNL) the composition is skewed to low complexity.

The protein belongs to the mitochondrion-specific ribosomal protein mS26 family. In terms of assembly, component of the mitochondrial small ribosomal subunit (mt-SSU). Mature yeast 74S mitochondrial ribosomes consist of a small (37S) and a large (54S) subunit. The 37S small subunit contains a 15S ribosomal RNA (15S mt-rRNA) and 34 different proteins. The 54S large subunit contains a 21S rRNA (21S mt-rRNA) and 46 different proteins.

The protein resides in the mitochondrion. Component of the mitochondrial ribosome (mitoribosome), a dedicated translation machinery responsible for the synthesis of mitochondrial genome-encoded proteins, including at least some of the essential transmembrane subunits of the mitochondrial respiratory chain. The mitoribosomes are attached to the mitochondrial inner membrane and translation products are cotranslationally integrated into the membrane. In Saccharomyces cerevisiae (strain ATCC 204508 / S288c) (Baker's yeast), this protein is Small ribosomal subunit protein mS26 (PET123).